Consider the following 361-residue polypeptide: Glyceraldehyde-3-phosphate dehydrogenase, glycosomal (361 aa).

Residues 13–14 (RI), aspartate 39, glutamine 92, and serine 135 contribute to the NAD(+) site. Residues 166 to 168 (SCT), threonine 198, 227 to 228 (TG), and arginine 250 each bind D-glyceraldehyde 3-phosphate. The Nucleophile role is filled by cysteine 167. Residue asparagine 336 coordinates NAD(+). A Microbody targeting signal motif is present at residues 359–361 (SKM).

This sequence belongs to the glyceraldehyde-3-phosphate dehydrogenase family. Homotetramer.

The protein localises to the glycosome. The catalysed reaction is D-glyceraldehyde 3-phosphate + phosphate + NAD(+) = (2R)-3-phospho-glyceroyl phosphate + NADH + H(+). It functions in the pathway carbohydrate degradation; glycolysis; pyruvate from D-glyceraldehyde 3-phosphate: step 1/5. The protein is Glyceraldehyde-3-phosphate dehydrogenase, glycosomal (GAPG) of Leishmania mexicana.